A 421-amino-acid chain; its full sequence is Tol-Pal system protein TolB (421 aa).

A signal peptide spans 1 to 16; it reads MRILVFLWLGLSSLFA.

The protein belongs to the TolB family. As to quaternary structure, the Tol-Pal system is composed of five core proteins: the inner membrane proteins TolA, TolQ and TolR, the periplasmic protein TolB and the outer membrane protein Pal. They form a network linking the inner and outer membranes and the peptidoglycan layer.

It is found in the periplasm. Functionally, part of the Tol-Pal system, which plays a role in outer membrane invagination during cell division and is important for maintaining outer membrane integrity. This chain is Tol-Pal system protein TolB, found in Wolinella succinogenes (strain ATCC 29543 / DSM 1740 / CCUG 13145 / JCM 31913 / LMG 7466 / NCTC 11488 / FDC 602W) (Vibrio succinogenes).